The sequence spans 120 residues: Spermidine export protein MdtJ (120 aa).

The next 4 helical transmembrane spans lie at 1 to 21, 31 to 51, 54 to 74, and 81 to 101; these read MFYW…TLSM, AGFI…SFAV, IALG…ITIF, and EALS…IVLI.

This sequence belongs to the drug/metabolite transporter (DMT) superfamily. Small multidrug resistance (SMR) (TC 2.A.7.1) family. MdtJ subfamily. In terms of assembly, forms a complex with MdtI.

It is found in the cell inner membrane. Catalyzes the excretion of spermidine. This chain is Spermidine export protein MdtJ, found in Salmonella agona (strain SL483).